The sequence spans 197 residues: Holliday junction branch migration complex subunit RuvA (197 aa).

The domain I stretch occupies residues methionine 1–valine 63. The domain II stretch occupies residues asparagine 64–leucine 142. The segment at leucine 142–proline 146 is flexible linker. The interval alanine 147 to lysine 197 is domain III.

Belongs to the RuvA family. In terms of assembly, homotetramer. Forms an RuvA(8)-RuvB(12)-Holliday junction (HJ) complex. HJ DNA is sandwiched between 2 RuvA tetramers; dsDNA enters through RuvA and exits via RuvB. An RuvB hexamer assembles on each DNA strand where it exits the tetramer. Each RuvB hexamer is contacted by two RuvA subunits (via domain III) on 2 adjacent RuvB subunits; this complex drives branch migration. In the full resolvosome a probable DNA-RuvA(4)-RuvB(12)-RuvC(2) complex forms which resolves the HJ.

The protein localises to the cytoplasm. Its function is as follows. The RuvA-RuvB-RuvC complex processes Holliday junction (HJ) DNA during genetic recombination and DNA repair, while the RuvA-RuvB complex plays an important role in the rescue of blocked DNA replication forks via replication fork reversal (RFR). RuvA specifically binds to HJ cruciform DNA, conferring on it an open structure. The RuvB hexamer acts as an ATP-dependent pump, pulling dsDNA into and through the RuvAB complex. HJ branch migration allows RuvC to scan DNA until it finds its consensus sequence, where it cleaves and resolves the cruciform DNA. This chain is Holliday junction branch migration complex subunit RuvA, found in Lactococcus lactis subsp. cremoris (strain MG1363).